We begin with the raw amino-acid sequence, 269 residues long: 4-hydroxy-tetrahydrodipicolinate reductase (269 aa).

NAD(+) is bound by residues 10–15 (GANGRM), glutamate 36, 99–101 (GTT), and 123–126 (AANF). Residue histidine 156 is the Proton donor/acceptor of the active site. Residue histidine 157 coordinates (S)-2,3,4,5-tetrahydrodipicolinate. Residue lysine 160 is the Proton donor of the active site. 166-167 (GT) is a (S)-2,3,4,5-tetrahydrodipicolinate binding site.

It belongs to the DapB family.

It localises to the cytoplasm. It carries out the reaction (S)-2,3,4,5-tetrahydrodipicolinate + NAD(+) + H2O = (2S,4S)-4-hydroxy-2,3,4,5-tetrahydrodipicolinate + NADH + H(+). The enzyme catalyses (S)-2,3,4,5-tetrahydrodipicolinate + NADP(+) + H2O = (2S,4S)-4-hydroxy-2,3,4,5-tetrahydrodipicolinate + NADPH + H(+). Its pathway is amino-acid biosynthesis; L-lysine biosynthesis via DAP pathway; (S)-tetrahydrodipicolinate from L-aspartate: step 4/4. In terms of biological role, catalyzes the conversion of 4-hydroxy-tetrahydrodipicolinate (HTPA) to tetrahydrodipicolinate. This Neisseria gonorrhoeae (strain ATCC 700825 / FA 1090) protein is 4-hydroxy-tetrahydrodipicolinate reductase.